The primary structure comprises 430 residues: Proteasome-activating nucleotidase (430 aa).

Residues 9–89 (TELKKEKKAF…LRRELDRMRV (81 aa)) adopt a coiled-coil conformation. ATP contacts are provided by residues 214-219 (GTGKTL) and His-353. The tract at residues 428-430 (LYR) is docks into pockets in the proteasome alpha-ring to cause gate opening.

Belongs to the AAA ATPase family. Homohexamer. The hexameric complex has a two-ring architecture resembling a top hat that caps the 20S proteasome core at one or both ends. Alone, can form a complex composed of two stacked hexameric rings in vitro. Upon ATP-binding, the C-terminus of PAN interacts with the alpha-rings of the proteasome core by binding to the intersubunit pockets.

Its subcellular location is the cytoplasm. ATPase activity is inhibited by EDTA, N-ethylmaleimide (NEM) and p-chloromercuriphenyl-sulfonic acid (PCMS) in vitro. In terms of biological role, ATPase which is responsible for recognizing, binding, unfolding and translocation of substrate proteins into the archaeal 20S proteasome core particle. Is essential for opening the gate of the 20S proteasome via an interaction with its C-terminus, thereby allowing substrate entry and access to the site of proteolysis. Thus, the C-termini of the proteasomal ATPase function like a 'key in a lock' to induce gate opening and therefore regulate proteolysis. Unfolding activity requires energy from ATP hydrolysis, whereas ATP binding alone promotes ATPase-20S proteasome association which triggers gate opening, and supports translocation of unfolded substrates. In addition to ATP, is able to cleave other nucleotide triphosphates such as CTP, GTP and UTP, but hydrolysis of these other nucleotides is less effective in promoting proteolysis than ATP. Moreover, PAN by itself can function as a chaperone in vitro. The polypeptide is Proteasome-activating nucleotidase (Methanocaldococcus jannaschii (strain ATCC 43067 / DSM 2661 / JAL-1 / JCM 10045 / NBRC 100440) (Methanococcus jannaschii)).